The primary structure comprises 901 residues: Protein translocase subunit SecA (901 aa).

Residues Q87, G105–T109, and D512 contribute to the ATP site. Residues Q853–S901 are disordered. Residues C885, C887, C896, and H897 each contribute to the Zn(2+) site. Positions K891–S901 are enriched in basic residues.

The protein belongs to the SecA family. In terms of assembly, monomer and homodimer. Part of the essential Sec protein translocation apparatus which comprises SecA, SecYEG and auxiliary proteins SecDF-YajC and YidC. Zn(2+) is required as a cofactor.

It localises to the cell inner membrane. Its subcellular location is the cytoplasm. It catalyses the reaction ATP + H2O + cellular proteinSide 1 = ADP + phosphate + cellular proteinSide 2.. In terms of biological role, part of the Sec protein translocase complex. Interacts with the SecYEG preprotein conducting channel. Has a central role in coupling the hydrolysis of ATP to the transfer of proteins into and across the cell membrane, serving both as a receptor for the preprotein-SecB complex and as an ATP-driven molecular motor driving the stepwise translocation of polypeptide chains across the membrane. This is Protein translocase subunit SecA from Enterobacter sp. (strain 638).